We begin with the raw amino-acid sequence, 957 residues long: MTQTLSQLENSGAFIERHIGPDAAQQQEMLNAVGAQSLNALTGQIVPKDIQLATPPQVGAPATEYAALAELKAIASRNKRFTSYIGMGYTAVQLPPVILRNMLENPGWYTAYTPYQPEVSQGRLEALLNFQQVTLDLTGLDMASASLLDEATAAAEAMAMAKRVSKLKNANRFFVASDVHPQTLDVVRTRAETFGFEVIVDDAQKVLDHQDVFGVLLQQVGTTGEIHDYTALISELKSRKIVVSVAADIMALVLLTAPGKQGADIVFGSAQRFGVPMGYGGPHAAFFAAKDEYKRSMPGRIIGVSKDAAGNTALRMAMQTREQHIRREKANSNICTSQVLLANIASLYAVYHGPIGLKRIANRIHRLTDILAAGLQQKGLKLRHAHYFDTLCVEVADKAGVLTRAEAAEINLRSDILNAVGITLDETTTRENVMQLFNVLLGDNHGLDIDTLDKDVAHDSRSIQPAMLRDDEILTHPVFNRYHSETEMMRYMHSLERKDLALNQAMIPLGSCTMKLNAAAEMIPITWPEFAELHPFCPPEQAEGYQQMIAQLADWLVKLTGYDAVCMQPNSGAQGEYAGLLAIRHYHESRNEGHRDICLIPASAHGTNPASAHMAGMQVVVVACDKNGNIDLTDLRAKAEQAGDNLSCIMVTYPSTHGVYEETIREVCEVVHQFGGQVYLDGANMNAQVGITSPGFIGADVSHLNLHKTFCIPHGGGGPGMGPIGVKAHLAPFVPGHSVVQIEGMLTRQGAVSAAPFGSASILPISWMYIRMMGAEGLKKASQVAILNANYIASRLQDAFPVLYTGRDGRVAHECILDIRPLKEETGISELDIAKRLIDYGFHAPTMSFPVAGTLMVEPTESESKVELDRFIDAMLAIRAEIDQVKAGVWPLEDNPLVNAPHIQNELVAEWAHPYSREVAVFPAGVADKYWPTVKRLDDVYGDRNLFCSCVPISEYQ.

An N6-(pyridoxal phosphate)lysine modification is found at Lys-708.

It belongs to the GcvP family. As to quaternary structure, the glycine cleavage system is composed of four proteins: P, T, L and H. Pyridoxal 5'-phosphate serves as cofactor.

It carries out the reaction N(6)-[(R)-lipoyl]-L-lysyl-[glycine-cleavage complex H protein] + glycine + H(+) = N(6)-[(R)-S(8)-aminomethyldihydrolipoyl]-L-lysyl-[glycine-cleavage complex H protein] + CO2. Its function is as follows. The glycine cleavage system catalyzes the degradation of glycine. The P protein binds the alpha-amino group of glycine through its pyridoxal phosphate cofactor; CO(2) is released and the remaining methylamine moiety is then transferred to the lipoamide cofactor of the H protein. The protein is Glycine dehydrogenase (decarboxylating) of Escherichia coli (strain SE11).